We begin with the raw amino-acid sequence, 168 residues long: Photosystem I assembly protein Ycf3 (168 aa).

TPR repeat units follow at residues 35 to 68 (AFTYYRDGMSAQSEGNYAEALQNYYEAMRPEIDP), 72 to 105 (SYILYNIGLIHTSNGEHTKALEYYFRALERNPFL), and 120 to 153 (GEEAIRQGDSEIAEAWFDQAAEYWKQAIALTPGN).

It belongs to the Ycf3 family.

Its subcellular location is the plastid. The protein resides in the chloroplast thylakoid membrane. Essential for the assembly of the photosystem I (PSI) complex. May act as a chaperone-like factor to guide the assembly of the PSI subunits. This is Photosystem I assembly protein Ycf3 from Nuphar advena (Common spatterdock).